A 227-amino-acid polypeptide reads, in one-letter code: Pre-hexon-linking protein VIII (227 aa).

Residue T64 is modified to Phosphothreonine; by host. A propeptide spanning residues 112–157 is cleaved from the precursor; the sequence is FRHRVRSPGQGITHLKIRGRGIQLNDESVSSSLGLRPDGTFQIGGA. S118 and S174 each carry phosphoserine; by host.

It belongs to the adenoviridae hexon-linking protein family. In terms of assembly, interacts with the peripentonal hexons as well as the hexons in the facets. Part of a complex composed of the core-capsid bridging protein, the endosome lysis protein VI and the hexon-linking protein VIII; these interactions bridge the virus core to the capsid. In terms of processing, cleaved by the viral protease during virion maturation. May cause the middle segment to be shed from the capsid.

It is found in the virion. It localises to the host nucleus. In terms of biological role, structural component of the virion that acts as a cement protein on the capsid interior and which glue the peripentonal hexons and group-of-nine hexons together. In Homo sapiens (Human), this protein is Pre-hexon-linking protein VIII.